The chain runs to 155 residues: Regulatory protein RecX (155 aa).

This sequence belongs to the RecX family.

Its subcellular location is the cytoplasm. In terms of biological role, modulates RecA activity. The polypeptide is Regulatory protein RecX (Pseudomonas fluorescens (strain ATCC BAA-477 / NRRL B-23932 / Pf-5)).